The chain runs to 174 residues: Urease accessory protein UreE (174 aa).

It belongs to the UreE family.

The protein localises to the cytoplasm. In terms of biological role, involved in urease metallocenter assembly. Binds nickel. Probably functions as a nickel donor during metallocenter assembly. The chain is Urease accessory protein UreE from Helicobacter hepaticus (strain ATCC 51449 / 3B1).